Reading from the N-terminus, the 1392-residue chain is L-2-aminoadipate reductase (1392 aa).

Lysine 541 participates in a covalent cross-link: Glycyl lysine isopeptide (Lys-Gly) (interchain with G-Cter in ubiquitin). Residues 843 to 920 (SQFTNVEREV…AFAAEIDRIK (78 aa)) enclose the Carrier domain. Position 880 is an O-(pantetheine 4'-phosphoryl)serine (serine 880). A Glycyl lysine isopeptide (Lys-Gly) (interchain with G-Cter in ubiquitin) cross-link involves residue lysine 1276.

It belongs to the ATP-dependent AMP-binding enzyme family. Pantetheine 4'-phosphate is required as a cofactor.

It catalyses the reaction (S)-2-amino-6-oxohexanoate + NADP(+) + H2O = L-2-aminoadipate + NADPH + 2 H(+). The catalysed reaction is (S)-2-amino-6-oxohexanoate + NAD(+) + H2O = L-2-aminoadipate + NADH + 2 H(+). It carries out the reaction (S)-2-amino-6-oxohexanoate + AMP + diphosphate + NADP(+) = L-2-aminoadipate + ATP + NADPH + H(+). The protein operates within amino-acid biosynthesis; L-lysine biosynthesis via AAA pathway; L-lysine from L-alpha-aminoadipate (fungal route): step 1/3. Catalyzes the activation of alpha-aminoadipate by ATP-dependent adenylation and the reduction of activated alpha-aminoadipate by NADPH. The activated alpha-aminoadipate is bound to the phosphopantheinyl group of the enzyme itself before it is reduced to (S)-2-amino-6-oxohexanoate. This is L-2-aminoadipate reductase (LYS2) from Saccharomyces cerevisiae (strain ATCC 204508 / S288c) (Baker's yeast).